The chain runs to 193 residues: UPF0301 protein SCO2948 (193 aa).

The protein belongs to the UPF0301 (AlgH) family.

This chain is UPF0301 protein SCO2948, found in Streptomyces coelicolor (strain ATCC BAA-471 / A3(2) / M145).